Here is a 546-residue protein sequence, read N- to C-terminus: Chaperonin GroEL (546 aa).

Residues 30-33, Lys-51, 87-91, Gly-415, 479-481, and Asp-495 contribute to the ATP site; these read TLGP, DGTTT, and NAA. Positions 526–546 are disordered; sequence KEDAPMPGGMPGGMGGMGMDM. Residues 534 to 546 show a composition bias toward gly residues; sequence GMPGGMGGMGMDM.

It belongs to the chaperonin (HSP60) family. As to quaternary structure, forms a cylinder of 14 subunits composed of two heptameric rings stacked back-to-back. Interacts with the co-chaperonin GroES.

Its subcellular location is the cytoplasm. It carries out the reaction ATP + H2O + a folded polypeptide = ADP + phosphate + an unfolded polypeptide.. Its function is as follows. Together with its co-chaperonin GroES, plays an essential role in assisting protein folding. The GroEL-GroES system forms a nano-cage that allows encapsulation of the non-native substrate proteins and provides a physical environment optimized to promote and accelerate protein folding. This Burkholderia cepacia (Pseudomonas cepacia) protein is Chaperonin GroEL.